Here is a 65-residue protein sequence, read N- to C-terminus: Large ribosomal subunit protein bL35 (65 aa).

The tract at residues 1–22 (MPKLKTKSGAAKRFKKTGKGGF) is disordered.

Belongs to the bacterial ribosomal protein bL35 family.

The protein is Large ribosomal subunit protein bL35 of Francisella philomiragia subsp. philomiragia (strain ATCC 25017 / CCUG 19701 / FSC 153 / O#319-036).